The primary structure comprises 238 residues: RAD9, HUS1, RAD1-interacting nuclear orphan protein 1 (238 aa).

Positions 1–10 (MPPRKKRRQP) are enriched in basic residues. Residues 1-31 (MPPRKKRRQPSQKAPLLFHQQPLEGPKHSCA) are disordered. Serine 51 bears the Phosphoserine; by PLK1 mark. Residues 55–61 (SWVSPDF) carry the RAD1-binding motif motif. Positions 74-105 (KHQNRARHSSRKPTTSKFPHLTFESPQSSSSE) are disordered. A compositionally biased stretch (basic residues) spans 75 to 84 (HQNRARHSSR). The short motif at 125-132 (RRPLVPVL) is the D-box element. The KEN box motif lies at 174–178 (QKENS).

In terms of assembly, interacts (when phosphorylated by PLK1) with POLQ; promoting POLQ recruitment to DNA damage sites. Interacts with RAD1; interaction is direct and promotes association with the 9-1-1 (RAD9-RAD1-HUS1) complex. Interacts with RAD18. Interacts with TOPBP1. Interacts with UBE2N. In terms of processing, phosphorylated at Ser-51 by PLK1, promoting interaction with polymerase theta (POLQ). Post-translationally, ubiquitinated and degraded by the APC/C complex upon mitotic exit. In terms of tissue distribution, weakly expressed in testis, prostate, ovary, thymus and small intestine. Expressed strongly in breast cancer cells.

The protein resides in the nucleus. Its subcellular location is the chromosome. In terms of biological role, involved in microhomology-mediated end-joining (MMEJ) DNA repair by promoting recruitment of polymerase theta (POLQ) to DNA damage sites during mitosis. MMEJ is an alternative non-homologous end-joining (NHEJ) machinery that takes place during mitosis to repair double-strand breaks in DNA that originate in S-phase. Accumulates in M-phase; following phosphorylation by PLK1, interacts with POLQ, enabling its recruitment to double-strand breaks for subsequent repair. Also involved in the DNA damage response (DDR) signaling in response to genotoxic stresses such as ionizing radiation (IR) during the S phase. Recruited to sites of DNA damage through interaction with the 9-1-1 cell-cycle checkpoint response complex and TOPBP1 in a ATR-dependent manner. Required for the progression of the G1 to S phase transition. Plays a role in the stimulation of CHEK1 phosphorylation. This Homo sapiens (Human) protein is RAD9, HUS1, RAD1-interacting nuclear orphan protein 1.